Here is a 183-residue protein sequence, read N- to C-terminus: ATP synthase subunit delta (183 aa).

This sequence belongs to the ATPase delta chain family. In terms of assembly, F-type ATPases have 2 components, F(1) - the catalytic core - and F(0) - the membrane proton channel. F(1) has five subunits: alpha(3), beta(3), gamma(1), delta(1), epsilon(1). F(0) has three main subunits: a(1), b(2) and c(10-14). The alpha and beta chains form an alternating ring which encloses part of the gamma chain. F(1) is attached to F(0) by a central stalk formed by the gamma and epsilon chains, while a peripheral stalk is formed by the delta and b chains.

The protein resides in the cell inner membrane. Functionally, f(1)F(0) ATP synthase produces ATP from ADP in the presence of a proton or sodium gradient. F-type ATPases consist of two structural domains, F(1) containing the extramembraneous catalytic core and F(0) containing the membrane proton channel, linked together by a central stalk and a peripheral stalk. During catalysis, ATP synthesis in the catalytic domain of F(1) is coupled via a rotary mechanism of the central stalk subunits to proton translocation. This protein is part of the stalk that links CF(0) to CF(1). It either transmits conformational changes from CF(0) to CF(1) or is implicated in proton conduction. This is ATP synthase subunit delta from Solidesulfovibrio magneticus (strain ATCC 700980 / DSM 13731 / RS-1) (Desulfovibrio magneticus).